The following is a 156-amino-acid chain: Transcriptional repressor NrdR (156 aa).

The segment at 3–34 is a zinc-finger region; that stretch reads CPFCGNIDTQVKDSRPAEDHVSIRRRRFCPAC. One can recognise an ATP-cone domain in the interval 49-139; the sequence is LVVIKTSGKR…VYKNFQAADD (91 aa).

This sequence belongs to the NrdR family. It depends on Zn(2+) as a cofactor.

Its function is as follows. Negatively regulates transcription of bacterial ribonucleotide reductase nrd genes and operons by binding to NrdR-boxes. The sequence is that of Transcriptional repressor NrdR from Ruegeria pomeroyi (strain ATCC 700808 / DSM 15171 / DSS-3) (Silicibacter pomeroyi).